Consider the following 348-residue polypeptide: Erlin-1 (348 aa).

At 1–7 the chain is on the cytoplasmic side; that stretch reads MNMTQAR. The helical transmembrane segment at 8 to 28 threads the bilayer; the sequence is VLVAAVVGLVAVLLYASIHKI. Topologically, residues 29–348 are lumenal; the sequence is EEGHLAVYYR…NLIQNKESTG (320 aa). The N-linked (GlcNAc...) asparagine glycan is linked to asparagine 108. Lysine 269 carries the post-translational modification N6-acetyllysine. Over residues 321–333 the composition is skewed to basic and acidic residues; it reads TGRESSHPSKEAL. Positions 321–348 are disordered; it reads TGRESSHPSKEALEPSGENLIQNKESTG. Over residues 339-348 the composition is skewed to polar residues; the sequence is NLIQNKESTG.

The protein belongs to the band 7/mec-2 family. In terms of assembly, forms a heteromeric complex with ERLIN2. In complex with ERLIN2, interacts with RNF170. Interacts with AMFR and SYVN1. Deubiquitinated by USP25; leading to stabilization.

The protein resides in the endoplasmic reticulum membrane. In terms of biological role, component of the ERLIN1/ERLIN2 complex which mediates the endoplasmic reticulum-associated degradation (ERAD) of inositol 1,4,5-trisphosphate receptors (IP3Rs). Involved in regulation of cellular cholesterol homeostasis by regulation the SREBP signaling pathway. Binds cholesterol and may promote ER retention of the SCAP-SREBF complex. This chain is Erlin-1, found in Pongo abelii (Sumatran orangutan).